Here is a 508-residue protein sequence, read N- to C-terminus: 2'-5'-oligoadenylate synthase-like protein 2 (508 aa).

Ser69 serves as a coordination point for ATP. Mg(2+) contacts are provided by Asp81, Asp83, and Asp154. Residues Arg213 and Lys216 each contribute to the ATP site. A Ubiquitin-like domain is found at 435 to 473 (ILVFVKYPGGQSKPFTIDPDDTILDLKEKIEDAGGPCAE).

It belongs to the 2-5A synthase family. Mg(2+) serves as cofactor. As to expression, strongly expressed in spleen dendritic cells, whereas, in bone marrow-derived dendritic cells, the amount increases during the maturation process. Expressed in many organs, the highest levels being in thymus, lung, and bone marrow.

It catalyses the reaction 3 ATP = 5'-triphosphoadenylyl-(2'-&gt;5')-adenylyl-(2'-&gt;5')-adenosine + 2 diphosphate. Produced as a latent enzyme which is activated by dsRNA generated during the course of viral infection. The dsRNA activator must be at least 15 nucleotides long, and no modification of the 2'-hydroxyl group is tolerated. ssRNA or dsDNA do not act as activators. Functionally, interferon-induced, dsRNA-activated antiviral enzyme which plays a critical role in cellular innate antiviral response. Synthesizes oligomers of 2'-5'-oligoadenylates (2-5A) from ATP which then bind to the inactive monomeric form of ribonuclease L (RNase L) leading to its dimerization and subsequent activation. Activation of RNase L leads to degradation of cellular as well as viral RNA, resulting in the inhibition of protein synthesis, thus terminating viral replication. Can mediate the antiviral effect via the classical RNase L-dependent pathway or an alternative antiviral pathway independent of RNase L. This Mus musculus (Mouse) protein is 2'-5'-oligoadenylate synthase-like protein 2 (Oasl2).